We begin with the raw amino-acid sequence, 206 residues long: Nucleoside triphosphate pyrophosphatase (206 aa).

Residue Asp-71 is the Proton acceptor of the active site.

The protein belongs to the Maf family. A divalent metal cation serves as cofactor.

Its subcellular location is the cytoplasm. The catalysed reaction is a ribonucleoside 5'-triphosphate + H2O = a ribonucleoside 5'-phosphate + diphosphate + H(+). It carries out the reaction a 2'-deoxyribonucleoside 5'-triphosphate + H2O = a 2'-deoxyribonucleoside 5'-phosphate + diphosphate + H(+). In terms of biological role, nucleoside triphosphate pyrophosphatase. May have a dual role in cell division arrest and in preventing the incorporation of modified nucleotides into cellular nucleic acids. This is Nucleoside triphosphate pyrophosphatase from Rippkaea orientalis (strain PCC 8801 / RF-1) (Cyanothece sp. (strain PCC 8801)).